We begin with the raw amino-acid sequence, 494 residues long: Cobyric acid synthase (494 aa).

The GATase cobBQ-type domain maps to 252–444; sequence DLNIAVIRLP…LHGLFDNGPW (193 aa). The active-site Nucleophile is Cys333. His436 is a catalytic residue.

This sequence belongs to the CobB/CobQ family. CobQ subfamily.

Its pathway is cofactor biosynthesis; adenosylcobalamin biosynthesis. Catalyzes amidations at positions B, D, E, and G on adenosylcobyrinic A,C-diamide. NH(2) groups are provided by glutamine, and one molecule of ATP is hydrogenolyzed for each amidation. In Nostoc punctiforme (strain ATCC 29133 / PCC 73102), this protein is Cobyric acid synthase.